The chain runs to 115 residues: Large ribosomal subunit protein bL19 (115 aa).

This sequence belongs to the bacterial ribosomal protein bL19 family.

Its function is as follows. This protein is located at the 30S-50S ribosomal subunit interface and may play a role in the structure and function of the aminoacyl-tRNA binding site. This chain is Large ribosomal subunit protein bL19, found in Bacillus velezensis (strain DSM 23117 / BGSC 10A6 / LMG 26770 / FZB42) (Bacillus amyloliquefaciens subsp. plantarum).